Consider the following 419-residue polypeptide: Multifunctional CCA protein (419 aa).

The ATP site is built by Gly8 and Arg11. CTP-binding residues include Gly8 and Arg11. Residues Asp21 and Asp23 each contribute to the Mg(2+) site. ATP is bound by residues Arg91, Arg149, and Arg152. CTP contacts are provided by Arg91, Arg149, and Arg152. In terms of domain architecture, HD spans 238 to 339; sequence CGVHLMMVID…VRLLERCDAF (102 aa).

It belongs to the tRNA nucleotidyltransferase/poly(A) polymerase family. Bacterial CCA-adding enzyme type 1 subfamily. Monomer. Can also form homodimers and oligomers. The cofactor is Mg(2+). Ni(2+) is required as a cofactor.

The catalysed reaction is a tRNA precursor + 2 CTP + ATP = a tRNA with a 3' CCA end + 3 diphosphate. It carries out the reaction a tRNA with a 3' CCA end + 2 CTP + ATP = a tRNA with a 3' CCACCA end + 3 diphosphate. Functionally, catalyzes the addition and repair of the essential 3'-terminal CCA sequence in tRNAs without using a nucleic acid template. Adds these three nucleotides in the order of C, C, and A to the tRNA nucleotide-73, using CTP and ATP as substrates and producing inorganic pyrophosphate. tRNA 3'-terminal CCA addition is required both for tRNA processing and repair. Also involved in tRNA surveillance by mediating tandem CCA addition to generate a CCACCA at the 3' terminus of unstable tRNAs. While stable tRNAs receive only 3'-terminal CCA, unstable tRNAs are marked with CCACCA and rapidly degraded. This chain is Multifunctional CCA protein, found in Variovorax paradoxus (strain S110).